Consider the following 60-residue polypeptide: Large ribosomal subunit protein uL30 (60 aa).

Belongs to the universal ribosomal protein uL30 family. In terms of assembly, part of the 50S ribosomal subunit.

The sequence is that of Large ribosomal subunit protein uL30 from Xanthobacter autotrophicus (strain ATCC BAA-1158 / Py2).